A 564-amino-acid polypeptide reads, in one-letter code: 2-succinyl-5-enolpyruvyl-6-hydroxy-3-cyclohexene-1-carboxylate synthase (564 aa).

The protein belongs to the TPP enzyme family. MenD subfamily. As to quaternary structure, homodimer. It depends on Mg(2+) as a cofactor. The cofactor is Mn(2+). Thiamine diphosphate serves as cofactor.

The enzyme catalyses isochorismate + 2-oxoglutarate + H(+) = 5-enolpyruvoyl-6-hydroxy-2-succinyl-cyclohex-3-ene-1-carboxylate + CO2. The protein operates within quinol/quinone metabolism; 1,4-dihydroxy-2-naphthoate biosynthesis; 1,4-dihydroxy-2-naphthoate from chorismate: step 2/7. Its pathway is quinol/quinone metabolism; menaquinone biosynthesis. Catalyzes the thiamine diphosphate-dependent decarboxylation of 2-oxoglutarate and the subsequent addition of the resulting succinic semialdehyde-thiamine pyrophosphate anion to isochorismate to yield 2-succinyl-5-enolpyruvyl-6-hydroxy-3-cyclohexene-1-carboxylate (SEPHCHC). The sequence is that of 2-succinyl-5-enolpyruvyl-6-hydroxy-3-cyclohexene-1-carboxylate synthase from Vibrio vulnificus (strain YJ016).